Here is a 150-residue protein sequence, read N- to C-terminus: MTLRLESLKPNKGARRRKLRKGRGIAAGQGASCGFGMRGQKSRSGRPTRPGFEGGQMPLYRRVPKLKHFTLVNPKSFTVLNVSALNEIKAGSTVNLDSLVKDGIVTSPKSPLKILGNGELKAKLTVQAAAFTASARAKIEAAGGTCEVLD.

The tract at residues 1–57 is disordered; sequence MTLRLESLKPNKGARRRKLRKGRGIAAGQGASCGFGMRGQKSRSGRPTRPGFEGGQM. Residues 12 to 23 are compositionally biased toward basic residues; it reads KGARRRKLRKGR. Positions 25-37 are enriched in gly residues; it reads IAAGQGASCGFGM.

It belongs to the universal ribosomal protein uL15 family. In terms of assembly, part of the 50S ribosomal subunit.

Its function is as follows. Binds to the 23S rRNA. This is Large ribosomal subunit protein uL15 from Synechococcus sp. (strain CC9311).